Consider the following 1866-residue polypeptide: Protein NLRC5 (1866 aa).

The tract at residues 105 to 135 (GAEGKSQPESQLHHGLKRPHQSCGSSPRRKQ) is disordered. An NACHT domain is found at 222-539 (RVTVLLGKAG…PKVNKDTLTQ (318 aa)). 228–235 (GKAGMGKT) is a binding site for ATP. LRR repeat units follow at residues 599 to 622 (LKKLATRKLTGPKVVELCHCVDET), 713 to 737 (MGRLQMLGLAGSKITARGISHLVKA), 741 to 765 (CPQLKEVSFRDNQLSDQVVLNIVEV), 769 to 792 (LPRLRKLDLSSNSICVSTLLCLAR), 869 to 892 (GPHLEEVDLSGNQLEDEGCRLMAE), 897 to 921 (LHIARKLDLSNNGLSVAGVHCVLRA), 930 to 953 (ELHISLQHKTVIFMFAQEPEEQKG), 976 to 1000 (SRRMRLTHCGLQEKHLEQLCKALGG), 1004 to 1026 (LGHLHLDFSGNALGDEGAARLAQ), 1031 to 1058 (LGALQSLNLSENGLSLDAVLGLVRCFST), 1138 to 1161 (LELQLSCEFLSDQSLETLLDCLPQ), 1162 to 1184 (LPQLSLLQLSQTGLSPKSPFLLA), 1242 to 1265 (CKDLSQVDLSANLLGDSGLRCLLE), 1272 to 1294 (ISGLLDLSHNSISQESALYLLET), 1462 to 1488 (CARLQQLSLSQVNLCEDDDASSLLLQS), 1493 to 1516 (LSELKTFRLTSSCVSTEGLAHLAS), 1521 to 1544 (CHHLEELDLSNNQFDEEGTKALMR), 1554 to 1577 (RLDLSHLLLNSSTLALLTHRLSQM), 1578 to 1600 (TCLQSLRLNRNSIGDVGCCHLSE), 1605 to 1628 (ATSLEELDLSHNQIGDAGVQHLAT), 1633 to 1656 (LPELRKIDLSGNSISSAGGVQLAE), 1661 to 1684 (CRRLEELMLGCNALGDPTALGLAQ), 1687 to 1714 (PQHLRVLHLPFSHLGPGGALSLAQALDG), 1715 to 1739 (SPHLEEISLAENNLAGGVLRFCMEL), 1741 to 1762 (LLRQIDLVSCKIDNQTAKLLTS), and 1795 to 1818 (MGRLKRVDLEKNQITALGAWLLAE).

Belongs to the NLRP family. Interacts with CHUK and IKBKB; prevents CHUK and IKBKB phosphorylation and inhibits their kinase activity. Interacts with RIGI and IFIH1; blocks the interaction of MAVS to RIGI. As to expression, expressed in spleen, thymus, lung, brain, tonsil, heart and prostate.

It localises to the cytoplasm. Probable regulator of the NF-kappa-B and type I interferon signaling pathways. May also regulate the type II interferon signaling pathway. Plays a role in homeostatic control of innate immunity and in antiviral defense mechanisms. The chain is Protein NLRC5 (NLRC5) from Homo sapiens (Human).